Reading from the N-terminus, the 65-residue chain is Conotoxin Lp5.1 (65 aa).

Positions 1 to 22 (MRCVPVFIILLLLIPSAPSVDA) are cleaved as a signal peptide. The propeptide occupies 23 to 50 (QRKTKDDVPLASFHDNAKRTLKRLWNKR).

This sequence belongs to the conotoxin T superfamily. Post-translationally, contains 2 disulfide bonds that can be either 'C1-C3, C2-C4' or 'C1-C4, C2-C3', since these disulfide connectivities have been observed for conotoxins with cysteine framework V (for examples, see AC P0DQQ7 and AC P81755). In terms of tissue distribution, expressed by the venom duct.

It is found in the secreted. In Conus leopardus (Leopard cone), this protein is Conotoxin Lp5.1.